A 175-amino-acid polypeptide reads, in one-letter code: MNRFIIADASKCIGCRTCEVACVVSHQENQDCASLTPETFLPRIHVIKGVNISTATVCRQCEDAPCANVCPNGAISRDKGFVHVMQERCIGCKTCVVACPYGAMEVVVRPVIRNSGAGLNVRADKAEANKCDLCNHREDGPACMAACPTHALICVDRNKLEQLSAEKRRRTALMF.

4Fe-4S ferredoxin-type domains lie at 2–32, 48–79, 80–109, and 124–157; these read NRFI…NQDC, KGVN…SRDK, GFVH…VVVR, and DKAE…CVDR. [4Fe-4S] cluster contacts are provided by Cys12, Cys15, Cys18, Cys22, Cys58, Cys61, Cys66, Cys70, Cys89, Cys92, Cys95, Cys99, Cys131, Cys134, Cys143, and Cys147.

[4Fe-4S] cluster is required as a cofactor.

Electron transport from formate to hydrogen. The sequence is that of Electron transport protein HydN (hydN) from Escherichia coli O157:H7.